A 272-amino-acid polypeptide reads, in one-letter code: Putative pyruvate, phosphate dikinase regulatory protein (272 aa).

154-161 (GVSRTSKS) serves as a coordination point for ADP.

This sequence belongs to the pyruvate, phosphate/water dikinase regulatory protein family. PDRP subfamily.

The enzyme catalyses N(tele)-phospho-L-histidyl/L-threonyl-[pyruvate, phosphate dikinase] + ADP = N(tele)-phospho-L-histidyl/O-phospho-L-threonyl-[pyruvate, phosphate dikinase] + AMP + H(+). It carries out the reaction N(tele)-phospho-L-histidyl/O-phospho-L-threonyl-[pyruvate, phosphate dikinase] + phosphate + H(+) = N(tele)-phospho-L-histidyl/L-threonyl-[pyruvate, phosphate dikinase] + diphosphate. Bifunctional serine/threonine kinase and phosphorylase involved in the regulation of the pyruvate, phosphate dikinase (PPDK) by catalyzing its phosphorylation/dephosphorylation. In Wolbachia pipientis subsp. Culex pipiens (strain wPip), this protein is Putative pyruvate, phosphate dikinase regulatory protein.